The primary structure comprises 206 residues: HTH-type transcriptional regulator Hpr (206 aa).

The HTH marR-type domain maps to 13-157; it reads ALLFSQRMAQ…MMCIIRNIYG (145 aa). Positions 63 to 86 form a DNA-binding region, H-T-H motif; it reads ISEIAKFGVMHVSTAFNFSKKLEE. Residues 186-206 are disordered; the sequence is SEELEDSADAAEKAAKANQIV.

In terms of assembly, homodimer.

Its function is as follows. Negative regulator of protease production and sporulation. This is HTH-type transcriptional regulator Hpr from Bacillus pumilus (strain SAFR-032).